The sequence spans 70 residues: Large ribosomal subunit protein bL31 (70 aa).

Residues Cys-16, Cys-18, Cys-37, and Cys-40 each coordinate Zn(2+).

Belongs to the bacterial ribosomal protein bL31 family. Type A subfamily. As to quaternary structure, part of the 50S ribosomal subunit. It depends on Zn(2+) as a cofactor.

In terms of biological role, binds the 23S rRNA. This is Large ribosomal subunit protein bL31 from Alteromonas mediterranea (strain DSM 17117 / CIP 110805 / LMG 28347 / Deep ecotype).